Reading from the N-terminus, the 391-residue chain is Phosphoglycerate kinase (391 aa).

Substrate contacts are provided by residues Asp21–Asn23, Arg36, His59–Arg62, Arg113, and Arg146. Residues Lys197, Glu319, and Gly345–Thr348 each bind ATP.

Belongs to the phosphoglycerate kinase family. In terms of assembly, monomer.

The protein resides in the cytoplasm. It carries out the reaction (2R)-3-phosphoglycerate + ATP = (2R)-3-phospho-glyceroyl phosphate + ADP. It functions in the pathway carbohydrate degradation; glycolysis; pyruvate from D-glyceraldehyde 3-phosphate: step 2/5. The protein is Phosphoglycerate kinase of Shewanella frigidimarina (strain NCIMB 400).